The primary structure comprises 35 residues: Kunitz-type serine protease inhibitor G1 (35 aa).

Residues 6–35 (CKLPPDSGPCKGHFPAFYYDPVSSYCQKFI) form the BPTI/Kunitz inhibitor domain.

Contains three disulfide bonds. Expressed by the venom gland.

Its subcellular location is the secreted. Functionally, serine protease inhibitor. This chain is Kunitz-type serine protease inhibitor G1, found in Micrurus pyrrhocryptus (Coral snake).